The primary structure comprises 166 residues: Monodehydroascorbate reductase, fruit isozyme (166 aa).

This sequence belongs to the FAD-dependent oxidoreductase family. FAD serves as cofactor. In terms of processing, the N-terminus is blocked.

The enzyme catalyses 2 monodehydro-L-ascorbate radical + NADH + H(+) = 2 L-ascorbate + NAD(+). Its function is as follows. Catalyzes the conversion of monodehydroascorbate to ascorbate, oxidizing NADH in the process. The protein is Monodehydroascorbate reductase, fruit isozyme of Cucumis sativus (Cucumber).